The following is a 95-amino-acid chain: Protein TusB (95 aa).

It belongs to the DsrH/TusB family. In terms of assembly, heterohexamer, formed by a dimer of trimers. The hexameric TusBCD complex contains 2 copies each of TusB, TusC and TusD. The TusBCD complex interacts with TusE.

It localises to the cytoplasm. In terms of biological role, part of a sulfur-relay system required for 2-thiolation of 5-methylaminomethyl-2-thiouridine (mnm(5)s(2)U) at tRNA wobble positions. The chain is Protein TusB from Buchnera aphidicola subsp. Schizaphis graminum (strain Sg).